Here is a 121-residue protein sequence, read N- to C-terminus: Spermidine export protein MdtJ (121 aa).

M1 is a topological domain (cytoplasmic). The helical transmembrane segment at 2–22 (YIYWILLGLAVATEITGTLSM) threads the bilayer. The Periplasmic portion of the chain corresponds to 23–31 (KWASVSEGN). The helical transmembrane segment at 32 to 52 (GGFILMLVMISLSYIFLSFAV) threads the bilayer. Residues 53–54 (KK) are Cytoplasmic-facing. Residues 55 to 75 (IALGVAYALWEGIGILFITLF) form a helical membrane-spanning segment. Residues 76–81 (SVLLFD) are Periplasmic-facing. Residues 82–102 (ESLSLMKIAGLTTLVAGIVLI) form a helical membrane-spanning segment. Topologically, residues 103 to 121 (KSGTRKARKPELEVNHGAV) are cytoplasmic.

The protein belongs to the drug/metabolite transporter (DMT) superfamily. Small multidrug resistance (SMR) (TC 2.A.7.1) family. MdtJ subfamily. As to quaternary structure, forms a complex with MdtI.

The protein localises to the cell inner membrane. Its function is as follows. Catalyzes the excretion of spermidine. In Escherichia coli O6:H1 (strain CFT073 / ATCC 700928 / UPEC), this protein is Spermidine export protein MdtJ (mdtJ).